A 530-amino-acid chain; its full sequence is UDP-N-acetylmuramoyl-L-alanyl-D-glutamate--2,6-diaminopimelate ligase (530 aa).

L52 serves as a coordination point for UDP-N-acetyl-alpha-D-muramoyl-L-alanyl-D-glutamate. 139–145 serves as a coordination point for ATP; the sequence is GTSGKTT. UDP-N-acetyl-alpha-D-muramoyl-L-alanyl-D-glutamate-binding positions include 181 to 182, S208, and R216; that span reads TT. An N6-carboxylysine modification is found at K248. Residues R410, 434–437, G488, and E492 each bind meso-2,6-diaminopimelate; that span reads DNPR. Positions 434–437 match the Meso-diaminopimelate recognition motif motif; sequence DNPR.

The protein belongs to the MurCDEF family. MurE subfamily. It depends on Mg(2+) as a cofactor. Carboxylation is probably crucial for Mg(2+) binding and, consequently, for the gamma-phosphate positioning of ATP.

Its subcellular location is the cytoplasm. It catalyses the reaction UDP-N-acetyl-alpha-D-muramoyl-L-alanyl-D-glutamate + meso-2,6-diaminopimelate + ATP = UDP-N-acetyl-alpha-D-muramoyl-L-alanyl-gamma-D-glutamyl-meso-2,6-diaminopimelate + ADP + phosphate + H(+). Its pathway is cell wall biogenesis; peptidoglycan biosynthesis. Catalyzes the addition of meso-diaminopimelic acid to the nucleotide precursor UDP-N-acetylmuramoyl-L-alanyl-D-glutamate (UMAG) in the biosynthesis of bacterial cell-wall peptidoglycan. The polypeptide is UDP-N-acetylmuramoyl-L-alanyl-D-glutamate--2,6-diaminopimelate ligase (Mycobacterium leprae (strain TN)).